We begin with the raw amino-acid sequence, 357 residues long: Protein-glutamate methylesterase/protein-glutamine glutaminase (357 aa).

One can recognise a Response regulatory domain in the interval 3 to 120; it reads RVLVVDDSAF…SLDLYKIKEQ (118 aa). Position 54 is a 4-aspartylphosphate (aspartate 54). The CheB-type methylesterase domain occupies 161 to 355; sequence PGTGRQIVCI…ASITSCVKKE (195 aa). Residues serine 173, histidine 200, and aspartate 296 contribute to the active site.

Belongs to the CheB family. Phosphorylated by CheA. Phosphorylation of the N-terminal regulatory domain activates the methylesterase activity.

It localises to the cytoplasm. The catalysed reaction is [protein]-L-glutamate 5-O-methyl ester + H2O = L-glutamyl-[protein] + methanol + H(+). It catalyses the reaction L-glutaminyl-[protein] + H2O = L-glutamyl-[protein] + NH4(+). Its function is as follows. Involved in the modulation of the chemotaxis system; catalyzes the demethylation of specific methylglutamate residues introduced into the chemoreceptors (methyl-accepting chemotaxis proteins) by CheR. B.subtilis has an effective methylation-independent adaptation system but must utilize the methylation system for adaptation to high concentrations of attractant. This chain is Protein-glutamate methylesterase/protein-glutamine glutaminase, found in Bacillus subtilis (strain 168).